Consider the following 193-residue polypeptide: uncharacterized protein (193 aa).

Disordered regions lie at residues 1 to 21 (MPKG…APPL), 53 to 96 (GAPA…PWPS), and 114 to 136 (SGPE…ASAS). Low complexity predominate over residues 53 to 70 (GAPAGGAPAAGGRSLPQG). Pro residues predominate over residues 71-95 (PSAPAPPPPPGLGPPSERPCPPPWP). Low complexity predominate over residues 116-127 (PEAAASPLAPGP).

This is an uncharacterized protein from Bos taurus (Bovine).